Here is a 148-residue protein sequence, read N- to C-terminus: Snaclec 8 (148 aa).

The signal sequence occupies residues 1-23 (MGRFIFVSFSLLVVFFSLSGTEA). The 115-residue stretch at 34 to 148 (YDQNCYKAFE…DTQFRLQEPG (115 aa)) folds into the C-type lectin domain.

It belongs to the snaclec family. In terms of assembly, heterodimer; disulfide-linked. Post-translationally, contains disulfide bonds. As to expression, expressed by the venom gland.

The protein resides in the secreted. Functionally, interferes with one step of hemostasis (modulation of platelet aggregation, or coagulation cascade, for example). The protein is Snaclec 8 of Echis carinatus sochureki (Saw-scaled viper).